Consider the following 117-residue polypeptide: UPF0342 protein GWCH70_0629 (117 aa).

The protein belongs to the UPF0342 family.

The chain is UPF0342 protein GWCH70_0629 from Geobacillus sp. (strain WCH70).